Here is a 636-residue protein sequence, read N- to C-terminus: Guanine-nucleotide exchange factor YEL1 (636 aa).

2 disordered regions span residues 1–29 and 213–234; these read MTGLEGAQNLTVADKQLTPDEGVLTESPK and RPPSQPRYSLSGRRTNGNGGHS. The SEC7 domain occupies 1 to 203; it reads MTGLEGAQNL…NRELSLCYYQ (203 aa). In terms of domain architecture, PH spans 333–475; that stretch reads RKLMSWFRKH…ACCNFWSARI (143 aa).

Belongs to the YEL1 family.

Its subcellular location is the cytoplasm. The protein resides in the cell membrane. The protein localises to the bud neck. It localises to the bud tip. In terms of biological role, guanine nucleotide exchange factor for ARF3 required for localization of ARF3 to the bud neck and tip and involved in actin patch polarization. The chain is Guanine-nucleotide exchange factor YEL1 (YEL1) from Lachancea thermotolerans (strain ATCC 56472 / CBS 6340 / NRRL Y-8284) (Yeast).